Consider the following 643-residue polypeptide: Phosphatidylinositol-3,5-bisphosphate 3-phosphatase MTMR2 (643 aa).

Polar residues-rich tracts occupy residues 1-12 (MEKSSSCESLGS) and 23-40 (DSLS…VHTK). Residues 1–56 (MEKSSSCESLGSQPAAARPPSVDSLSSASTSHSENSVHTKSASVVSSDSISTSADN) form a disordered region. Phosphoserine occurs at positions 6 and 9. Positions 41–55 (SASVVSSDSISTSAD) are enriched in low complexity. Ser-58 carries the phosphoserine modification. Residues 68-139 (NKLAEMEEPP…GVINRVEKIG (72 aa)) form the GRAM domain. Residues 205–580 (GWKLYDPLLE…RHLELWVGYY (376 aa)) enclose the Myotubularin phosphatase domain. 3 residues coordinate a 1,2-diacyl-sn-glycero-3-phospho-(1D-myo-inositol-3,5-bisphosphate): Asn-330, Asn-355, and Ile-356. A 1,2-diacyl-sn-glycero-3-phospho-(1D-myo-inositol-3-phosphate)-binding residues include Asn-330, Asn-355, and Ile-356. The active-site Phosphocysteine intermediate is the Cys-417. A 1,2-diacyl-sn-glycero-3-phospho-(1D-myo-inositol-3,5-bisphosphate)-binding residues include Ser-418, Asp-419, Gly-420, Trp-421, Asp-422, Arg-423, Arg-459, and Arg-463. 6 residues coordinate a 1,2-diacyl-sn-glycero-3-phospho-(1D-myo-inositol-3-phosphate): Ser-418, Asp-419, Gly-420, Trp-421, Asp-422, and Arg-423. Arg-463 lines the a 1,2-diacyl-sn-glycero-3-phospho-(1D-myo-inositol-3-phosphate) pocket. Positions 593–627 (IHNRYKELLAKRAELQKKVEELQREISNRSTSSSE) form a coiled coil. Positions 615 to 643 (QREISNRSTSSSERASSPAQCVTPVQTVV) are disordered. Over residues 620–631 (NRSTSSSERASS) the composition is skewed to low complexity. A compositionally biased stretch (polar residues) spans 632-643 (PAQCVTPVQTVV).

It belongs to the protein-tyrosine phosphatase family. Non-receptor class myotubularin subfamily. Homodimer (via coiled-coil domain). Heterotetramer consisting of one MTMR2 dimer and one SBF2/MTMR13 dimer; specifically in peripheral nerves stabilizes SBF2/MTMR13 at the membranes and increases MTMR2 catalytic activity towards phosphatidylinositol 3,5-bisphosphate and to a lesser extent towards phosphatidylinositol 3-phosphate. Heterodimer with SBF1/MTMR5; acts as an adapter for the phosphatase MTMR2 to regulate MTMR2 catalytic activity and subcellular location. Heterodimer with MTMR12. Phosphorylation at Ser-58 decreases MTMR2 localization to endocytic vesicular structures.

It is found in the cytoplasm. It localises to the early endosome membrane. The protein resides in the perinuclear region. Its subcellular location is the cell projection. The protein localises to the axon. It is found in the endosome membrane. The enzyme catalyses a 1,2-diacyl-sn-glycero-3-phospho-(1D-myo-inositol-3,5-bisphosphate) + H2O = a 1,2-diacyl-sn-glycero-3-phospho-(1D-myo-inositol-5-phosphate) + phosphate. It carries out the reaction a 1,2-diacyl-sn-glycero-3-phospho-(1D-myo-inositol-3-phosphate) + H2O = a 1,2-diacyl-sn-glycero-3-phospho-(1D-myo-inositol) + phosphate. The catalysed reaction is 1,2-dioctanoyl-sn-glycero-3-phospho-(1-D-myo-inositol-3-phosphate) + H2O = 1,2-dioctanoyl-sn-glycero-3-phospho-(1D-myo-inositol) + phosphate. It catalyses the reaction 1,2-dioctanoyl-sn-glycero-3-phospho-(1D-myo-inositol-3,5-bisphosphate) + H2O = 1,2-dioctanoyl-sn-glycero-3-phospho-(1D-myo-inositol-5-phosphate) + phosphate. Its function is as follows. Lipid phosphatase that specifically dephosphorylates the D-3 position of phosphatidylinositol 3-phosphate and phosphatidylinositol 3,5-bisphosphate, generating phosphatidylinositol and phosphatidylinositol 5-phosphate. Regulates the level of these phosphoinositides critical for various biological processes including autophagy initiation and autophagosome maturation. This is Phosphatidylinositol-3,5-bisphosphate 3-phosphatase MTMR2 from Homo sapiens (Human).